The sequence spans 79 residues: Small ribosomal subunit protein bS18 (79 aa).

The protein belongs to the bacterial ribosomal protein bS18 family. In terms of assembly, part of the 30S ribosomal subunit. Forms a tight heterodimer with protein bS6.

Functionally, binds as a heterodimer with protein bS6 to the central domain of the 16S rRNA, where it helps stabilize the platform of the 30S subunit. The sequence is that of Small ribosomal subunit protein bS18 from Enterococcus faecalis (strain ATCC 700802 / V583).